A 362-amino-acid polypeptide reads, in one-letter code: Large ribosomal subunit protein uL4A (362 aa).

Residue serine 2 is modified to N-acetylserine. Arginine 95 is subject to Omega-N-methylarginine. The segment at 277–362 (PSHIISTSDV…AVFTETLKHD (86 aa)) is C-terminal-extended nuclear localization signal.

It belongs to the universal ribosomal protein uL4 family. As to quaternary structure, component of the large ribosomal subunit (LSU). Mature yeast ribosomes consist of a small (40S) and a large (60S) subunit. The 40S small subunit contains 1 molecule of ribosomal RNA (18S rRNA) and 33 different proteins (encoded by 57 genes). The large 60S subunit contains 3 rRNA molecules (25S, 5.8S and 5S rRNA) and 46 different proteins (encoded by 81 genes). uL4 is associated with the polypeptide exit tunnel. uL4 interacts with its chaperone ACL4 and the nuclear import receptor KAP104. N-terminally acetylated by acetyltransferase NatA.

The protein localises to the cytoplasm. Its subcellular location is the nucleus. Its function is as follows. Component of the ribosome, a large ribonucleoprotein complex responsible for the synthesis of proteins in the cell. The small ribosomal subunit (SSU) binds messenger RNAs (mRNAs) and translates the encoded message by selecting cognate aminoacyl-transfer RNA (tRNA) molecules. The large subunit (LSU) contains the ribosomal catalytic site termed the peptidyl transferase center (PTC), which catalyzes the formation of peptide bonds, thereby polymerizing the amino acids delivered by tRNAs into a polypeptide chain. The nascent polypeptides leave the ribosome through a tunnel in the LSU and interact with protein factors that function in enzymatic processing, targeting, and the membrane insertion of nascent chains at the exit of the ribosomal tunnel. uL4 participates in the regulation of the accumulation of its own mRNA. This Saccharomyces cerevisiae (strain ATCC 204508 / S288c) (Baker's yeast) protein is Large ribosomal subunit protein uL4A.